Consider the following 302-residue polypeptide: Glutaminase (302 aa).

Substrate contacts are provided by Ser-61, Asn-111, Glu-155, Asn-162, Tyr-186, Tyr-238, and Val-256.

This sequence belongs to the glutaminase family. As to quaternary structure, homotetramer.

The enzyme catalyses L-glutamine + H2O = L-glutamate + NH4(+). This is Glutaminase from Pseudomonas aeruginosa (strain LESB58).